We begin with the raw amino-acid sequence, 1219 residues long: Myosin-5 (1219 aa).

Over residues 1-12 (MAILKRGARKKV) the composition is skewed to basic residues. The disordered stretch occupies residues 1 to 20 (MAILKRGARKKVHQEPAKRS). One can recognise a Myosin motor domain in the interval 36–715 (VGVSDLTLLS…TLFALEHMRD (680 aa)). Position 129–136 (129–136 (GESGAGKT)) interacts with ATP. Position 357 is a phosphoserine (S357). Y359 carries the phosphotyrosine modification. An actin-binding region spans residues 404–486 (SIGILDIYGF…PGIFAAMNDS (83 aa)). 2 IQ domains span residues 719-739 (HNMA…RIDA) and 740-765 (ATKI…YGTK). Residues 771-961 (KERRSMSLLG…TISVRRGNPP (191 aa)) form the TH1 domain. The residue at position 777 (S777) is a Phosphoserine. Residues 951-964 (STISVRRGNPPNSQ) are compositionally biased toward polar residues. Disordered regions lie at residues 951–1106 (STIS…SELP) and 1139–1167 (TAYM…VLNS). Positions 974–984 (SISSGYHASSS) are enriched in low complexity. Phosphoserine is present on S992. The segment covering 1030–1041 (NPASTLTASQSN) has biased composition (polar residues). Low complexity predominate over residues 1048–1063 (TAATRATPAATPAAAA). Residues 1072–1083 (IPPPPPPPPPSS) are compositionally biased toward pro residues. Positions 1085 to 1147 (PKEPMFEAAY…PTAYMKPHSG (63 aa)) constitute an SH3 domain. S1205 is modified (phosphoserine).

This sequence belongs to the TRAFAC class myosin-kinesin ATPase superfamily. Myosin family. As to quaternary structure, interacts (via myosin motor domain) with SHE4; this interaction is important for proper localization and may regulate the interaction of the motor domain with actin. Interacts (via SH3 domain) with VRP1; this interaction is required for localization to sites of polarized growth and may regulate the interaction of the tail domain with actin. Interacts (via SH3 domain) with PAN1; this interaction is important for late stages of endocytopsis. Interacts (via SH3 domain) with BBC1 and LAS17. Interacts (via C-terminal acidic tail) with ARC19 and ARC40; ARC19 and ARC40 are Arp2/3 complex subunits. Interacts with BZZ1, PKH1, PKH2, YPK1 and YPK2. Post-translationally, phosphorylation of the TEDS site (Ser-357) is required for the polarization of the actin cytoskeleton and for ligand-induced, but not for constitutive internalization of STE2. Phosphorylation probably activates the myosin-I ATPase activity. Ser-357 is phosphorylated by YPK2 in vitro.

Its subcellular location is the cytoplasm. The protein resides in the cytoskeleton. The protein localises to the actin patch. In terms of biological role, one of two redundant type-I myosins implicated in the organization of the actin cytoskeleton. Required for proper actin cytoskeleton polarization and for the internalization step in endocytosis. At the cell cortex, assembles in patch-like structures together with proteins from the actin-polymerizing machinery and promotes actin assembly. Functions redundantly with LAS17 as actin nucleation-promoting factor (NPF) for the Arp2/3 complex. Motor domain phosphorylation by PAK kinases CLA4 and STE20 promotes CDC42-regulated actin assembly. Functions together with the NPF PAN1 in late stages of endocytosis. Motor domain phosphorylation by PDK1 kinases PKH1 and PKH2, and by SGK kinases YPK1 and YPK2, promotes ligand-induced, but not constitutive endocytosis of the G protein-coupled receptor STE2. The sequence is that of Myosin-5 (MYO5) from Saccharomyces cerevisiae (strain YJM789) (Baker's yeast).